Reading from the N-terminus, the 152-residue chain is MASLEDGTYRLRAVTTSNPDPGVGGEYATVEGARQPVKAEPSTPPFFERQIWQVTRNSDGQSTIKYQGLNAPFEYGFSYDQLEQNAPVIAGDPKEYILQLVPSTTDVYIIRAPIQRVGVDVEVGVQGNNLVYKFFPVDGSGGDRPAWRFTRE.

Homodimer.

Functionally, binds and inhibits cysteine proteinases. Inhibits most strongly papain and cathepsin L, more weakly bromelain and cathepsin B while it is completely ineffective against cathepsin H. This Clitocybe nebularis (Clouded agaric) protein is Clitocypin-5 (clt5).